The following is a 260-amino-acid chain: Carbonic anhydrase 2 (260 aa).

The 257-residue stretch at 3 to 259 (HHWGYDSHNG…LKSREVRASF (257 aa)) folds into the Alpha-carbonic anhydrase domain. The Proton donor/acceptor role is filled by H64. H94, H96, and H119 together coordinate Zn(2+). 198 to 199 (TT) is a binding site for substrate.

Belongs to the alpha-carbonic anhydrase family. The cofactor is Zn(2+).

It is found in the cytoplasm. It localises to the cell membrane. It catalyses the reaction hydrogencarbonate + H(+) = CO2 + H2O. The enzyme catalyses urea = cyanamide + H2O. With respect to regulation, inhibited by acetazolamide. Catalyzes the reversible hydration of carbon dioxide. Can also hydrate cyanamide to urea. The polypeptide is Carbonic anhydrase 2 (CA2) (Gallus gallus (Chicken)).